The following is a 358-amino-acid chain: Mannonate dehydratase (358 aa).

Belongs to the mannonate dehydratase family. Fe(2+) is required as a cofactor. It depends on Mn(2+) as a cofactor.

It carries out the reaction D-mannonate = 2-dehydro-3-deoxy-D-gluconate + H2O. The protein operates within carbohydrate metabolism; pentose and glucuronate interconversion. Functionally, catalyzes the dehydration of D-mannonate. This chain is Mannonate dehydratase, found in Lactococcus lactis subsp. lactis (strain IL1403) (Streptococcus lactis).